A 339-amino-acid polypeptide reads, in one-letter code: Glyoxylate reductase (339 aa).

Residues 157-160 and 239-241 contribute to the NADP(+) site; these read LGRI and TAR. Catalysis depends on residues R241 and E270. Residue H289 is the Proton donor of the active site. Residue 289 to 291 participates in NADP(+) binding; sequence HIA.

The protein belongs to the D-isomer specific 2-hydroxyacid dehydrogenase family. GyaR subfamily. In terms of assembly, homodimer.

The protein localises to the cytoplasm. It carries out the reaction glycolate + NAD(+) = glyoxylate + NADH + H(+). This chain is Glyoxylate reductase, found in Thermofilum pendens (strain DSM 2475 / Hrk 5).